The primary structure comprises 503 residues: Probable cytosol aminopeptidase (503 aa).

2 residues coordinate Mn(2+): Lys271 and Asp276. The active site involves Lys283. Residues Asp294, Asp353, and Glu355 each coordinate Mn(2+). Residue Arg357 is part of the active site.

This sequence belongs to the peptidase M17 family. Mn(2+) is required as a cofactor.

The protein localises to the cytoplasm. It catalyses the reaction Release of an N-terminal amino acid, Xaa-|-Yaa-, in which Xaa is preferably Leu, but may be other amino acids including Pro although not Arg or Lys, and Yaa may be Pro. Amino acid amides and methyl esters are also readily hydrolyzed, but rates on arylamides are exceedingly low.. The catalysed reaction is Release of an N-terminal amino acid, preferentially leucine, but not glutamic or aspartic acids.. Functionally, presumably involved in the processing and regular turnover of intracellular proteins. Catalyzes the removal of unsubstituted N-terminal amino acids from various peptides. The protein is Probable cytosol aminopeptidase of Chlorobaculum parvum (strain DSM 263 / NCIMB 8327) (Chlorobium vibrioforme subsp. thiosulfatophilum).